A 419-amino-acid chain; its full sequence is UDP-N-acetylglucosamine 1-carboxyvinyltransferase 2 (419 aa).

A phosphoenolpyruvate-binding site is contributed by 22-23 (KN). UDP-N-acetyl-alpha-D-glucosamine is bound at residue Arg92. Cys116 serves as the catalytic Proton donor. A 2-(S-cysteinyl)pyruvic acid O-phosphothioketal modification is found at Cys116. UDP-N-acetyl-alpha-D-glucosamine contacts are provided by residues 121–125 (RPIDL), Asp306, and Val328.

It belongs to the EPSP synthase family. MurA subfamily.

The protein localises to the cytoplasm. It carries out the reaction phosphoenolpyruvate + UDP-N-acetyl-alpha-D-glucosamine = UDP-N-acetyl-3-O-(1-carboxyvinyl)-alpha-D-glucosamine + phosphate. Its pathway is cell wall biogenesis; peptidoglycan biosynthesis. Functionally, cell wall formation. Adds enolpyruvyl to UDP-N-acetylglucosamine. In Carboxydothermus hydrogenoformans (strain ATCC BAA-161 / DSM 6008 / Z-2901), this protein is UDP-N-acetylglucosamine 1-carboxyvinyltransferase 2.